Consider the following 199-residue polypeptide: Large ribosomal subunit protein bL17 (199 aa).

The tract at residues 123-199 is disordered; it reads DEANRARRAA…EESEAKDDTK (77 aa). The segment covering 137-152 has biased composition (basic and acidic residues); that stretch reads KADERADEKADEKAEE. Acidic residues predominate over residues 153–199; it reads TVEETTEAPAEESTEAAAEETVEETTEAPAEESTEAAEESEAKDDTK.

The protein belongs to the bacterial ribosomal protein bL17 family. As to quaternary structure, part of the 50S ribosomal subunit. Contacts protein L32.

In Mycolicibacterium smegmatis (strain ATCC 700084 / mc(2)155) (Mycobacterium smegmatis), this protein is Large ribosomal subunit protein bL17.